Reading from the N-terminus, the 432-residue chain is Bifunctional protein GlmU (432 aa).

The pyrophosphorylase stretch occupies residues 1–223 (MGKKSIIILA…EENFKGVNSK (223 aa)). Residues 9–12 (LAAG), K23, Q75, and 82–83 (GT) contribute to the UDP-N-acetyl-alpha-D-glucosamine site. D103 is a Mg(2+) binding site. The UDP-N-acetyl-alpha-D-glucosamine site is built by G135, E149, N164, and N221. A Mg(2+)-binding site is contributed by N221. A linker region spans residues 224–244 (VELADAEVIHQNRIKKEFMKA). An N-acetyltransferase region spans residues 245 to 432 (GVIMRLPDTI…FYKHFSSKKK (188 aa)). Residues R308 and K325 each coordinate UDP-N-acetyl-alpha-D-glucosamine. H336 (proton acceptor) is an active-site residue. The UDP-N-acetyl-alpha-D-glucosamine site is built by Y339 and N350. Acetyl-CoA is bound by residues 359 to 360 (NY), S378, A396, and R413.

In the N-terminal section; belongs to the N-acetylglucosamine-1-phosphate uridyltransferase family. This sequence in the C-terminal section; belongs to the transferase hexapeptide repeat family. Homotrimer. It depends on Mg(2+) as a cofactor.

The protein localises to the cytoplasm. It catalyses the reaction alpha-D-glucosamine 1-phosphate + acetyl-CoA = N-acetyl-alpha-D-glucosamine 1-phosphate + CoA + H(+). The catalysed reaction is N-acetyl-alpha-D-glucosamine 1-phosphate + UTP + H(+) = UDP-N-acetyl-alpha-D-glucosamine + diphosphate. It functions in the pathway nucleotide-sugar biosynthesis; UDP-N-acetyl-alpha-D-glucosamine biosynthesis; N-acetyl-alpha-D-glucosamine 1-phosphate from alpha-D-glucosamine 6-phosphate (route II): step 2/2. The protein operates within nucleotide-sugar biosynthesis; UDP-N-acetyl-alpha-D-glucosamine biosynthesis; UDP-N-acetyl-alpha-D-glucosamine from N-acetyl-alpha-D-glucosamine 1-phosphate: step 1/1. Its pathway is bacterial outer membrane biogenesis; LPS lipid A biosynthesis. Functionally, catalyzes the last two sequential reactions in the de novo biosynthetic pathway for UDP-N-acetylglucosamine (UDP-GlcNAc). The C-terminal domain catalyzes the transfer of acetyl group from acetyl coenzyme A to glucosamine-1-phosphate (GlcN-1-P) to produce N-acetylglucosamine-1-phosphate (GlcNAc-1-P), which is converted into UDP-GlcNAc by the transfer of uridine 5-monophosphate (from uridine 5-triphosphate), a reaction catalyzed by the N-terminal domain. This is Bifunctional protein GlmU from Aliarcobacter butzleri (strain RM4018) (Arcobacter butzleri).